A 619-amino-acid chain; its full sequence is Hypermethylated in cancer 2 protein (619 aa).

Residues 46–109 (CDVIIMVENS…IYTGKLLPSD (64 aa)) enclose the BTB domain. Serine 166, serine 169, and serine 197 each carry phosphoserine. Disordered regions lie at residues 180-293 (DVRK…VGNS) and 307-426 (MDVE…GHTG). Over residues 214 to 228 (LGLGGPAGGEMGLGG) the composition is skewed to gly residues. Residues 247-249 (DLS) form a binding to CtBP region. Residues 281-293 (APTSTSALPVGNS) are compositionally biased toward polar residues. Residues 337 to 357 (KKDWNKKEPVAGSPFDRRETG) are compositionally biased toward basic and acidic residues. A phosphoserine mark is found at serine 349 and serine 416. 5 C2H2-type zinc fingers span residues 446-468 (YVCI…VETH), 509-531 (FKCS…EKTH), 537-559 (FPCN…MRSH), 565-587 (FACD…MRVH), and 593-615 (YECQ…LRMH).

It belongs to the krueppel C2H2-type zinc-finger protein family. Hic subfamily. As to quaternary structure, self-associates. Interacts with HIC1.

Its subcellular location is the nucleus. Its function is as follows. Transcriptional repressor. The polypeptide is Hypermethylated in cancer 2 protein (Hic2) (Mus musculus (Mouse)).